Consider the following 190-residue polypeptide: Holliday junction branch migration complex subunit RuvA (190 aa).

The interval 1 to 64 (MIGRITGTLI…EDAHLLYGFG (64 aa)) is domain I. Positions 65–137 (TASERAAFRE…MRGKLGADIG (73 aa)) are domain II. Residues 137–141 (GATPH) are flexible linker. Positions 142 to 190 (AVPDSQSDILNALLALGYSEKESLAALKTLPEGLGVSDGIRQALKALAR) are domain III.

This sequence belongs to the RuvA family. In terms of assembly, homotetramer. Forms an RuvA(8)-RuvB(12)-Holliday junction (HJ) complex. HJ DNA is sandwiched between 2 RuvA tetramers; dsDNA enters through RuvA and exits via RuvB. An RuvB hexamer assembles on each DNA strand where it exits the tetramer. Each RuvB hexamer is contacted by two RuvA subunits (via domain III) on 2 adjacent RuvB subunits; this complex drives branch migration. In the full resolvosome a probable DNA-RuvA(4)-RuvB(12)-RuvC(2) complex forms which resolves the HJ.

The protein localises to the cytoplasm. In terms of biological role, the RuvA-RuvB-RuvC complex processes Holliday junction (HJ) DNA during genetic recombination and DNA repair, while the RuvA-RuvB complex plays an important role in the rescue of blocked DNA replication forks via replication fork reversal (RFR). RuvA specifically binds to HJ cruciform DNA, conferring on it an open structure. The RuvB hexamer acts as an ATP-dependent pump, pulling dsDNA into and through the RuvAB complex. HJ branch migration allows RuvC to scan DNA until it finds its consensus sequence, where it cleaves and resolves the cruciform DNA. This Bordetella avium (strain 197N) protein is Holliday junction branch migration complex subunit RuvA.